Reading from the N-terminus, the 293-residue chain is G1/S-specific cyclin-D3 (293 aa).

One can recognise a Cyclin N-terminal domain in the interval 27–152; it reads VLQSLLRLEE…LVLGKLKWDL (126 aa). The tract at residues 257–293 is disordered; that stretch reads REAAQTAPSPVPKAPGGSSSQGPSQTSTPTDVTAIHL. Residues serine 265 and serine 280 each carry the phosphoserine modification. Residues 271-286 show a composition bias toward low complexity; it reads PGGSSSQGPSQTSTPT. A Phosphothreonine modification is found at threonine 284.

It belongs to the cyclin family. Cyclin D subfamily. In terms of assembly, interacts with the CDK4 and CDK6 protein kinases to form a serine/threonine kinase holoenzyme complex. The cyclin subunit imparts substrate specificity to the complex. Interacts with ATF5. Interacts with EIF3K. Component of the ternary complex cyclin D/CDK4/CDKN1B required for nuclear translocation and modulation of CDK4-mediated kinase activity. Can form similar complexes with either CDKN1A or CDKN2A. In terms of processing, phosphorylation at Thr-284 by MAP kinases is required for ubiquitination and degradation by the DCX(AMBRA1) complex. Post-translationally, ubiquitinated by the DCX(AMBRA1) complex during the transition from G1 to S cell phase, leading to its degradation: ubiquitination is dependent on Thr-284 phosphorylation. The DCX(AMBRA1) complex represents the major regulator of CCND3 stability during the G1/S transition. Polyubiquitinated by the SCF(FBXL2) complex, leading to proteasomal degradation.

The protein localises to the nucleus. It is found in the cytoplasm. In terms of biological role, regulatory component of the cyclin D3-CDK4 (DC) complex that phosphorylates and inhibits members of the retinoblastoma (RB) protein family including RB1 and regulates the cell-cycle during G(1)/S transition. Phosphorylation of RB1 allows dissociation of the transcription factor E2F from the RB/E2F complex and the subsequent transcription of E2F target genes which are responsible for the progression through the G(1) phase. Hypophosphorylates RB1 in early G(1) phase. Cyclin D-CDK4 complexes are major integrators of various mitogenenic and antimitogenic signals. Component of the ternary complex, cyclin D3/CDK4/CDKN1B, required for nuclear translocation and activity of the cyclin D-CDK4 complex. Shows transcriptional coactivator activity with ATF5 independently of CDK4. This chain is G1/S-specific cyclin-D3, found in Rattus norvegicus (Rat).